Reading from the N-terminus, the 346-residue chain is UDP-3-O-acylglucosamine N-acyltransferase (346 aa).

His240 serves as the catalytic Proton acceptor.

It belongs to the transferase hexapeptide repeat family. LpxD subfamily. Homotrimer.

The enzyme catalyses a UDP-3-O-[(3R)-3-hydroxyacyl]-alpha-D-glucosamine + a (3R)-hydroxyacyl-[ACP] = a UDP-2-N,3-O-bis[(3R)-3-hydroxyacyl]-alpha-D-glucosamine + holo-[ACP] + H(+). The protein operates within bacterial outer membrane biogenesis; LPS lipid A biosynthesis. Its function is as follows. Catalyzes the N-acylation of UDP-3-O-acylglucosamine using 3-hydroxyacyl-ACP as the acyl donor. Is involved in the biosynthesis of lipid A, a phosphorylated glycolipid that anchors the lipopolysaccharide to the outer membrane of the cell. The sequence is that of UDP-3-O-acylglucosamine N-acyltransferase from Bacteroides fragilis (strain ATCC 25285 / DSM 2151 / CCUG 4856 / JCM 11019 / LMG 10263 / NCTC 9343 / Onslow / VPI 2553 / EN-2).